The following is a 551-amino-acid chain: FGGY carbohydrate kinase domain-containing protein (551 aa).

Belongs to the FGGY kinase family. As to expression, expressed in kidney, lung and small intestine and to a lower extent in liver and detected in cerebrospinal fluid (at protein level).

It catalyses the reaction D-ribulose + ATP = D-ribulose 5-phosphate + ADP + H(+). It participates in carbohydrate metabolism; pentose and glucuronate interconversion. Its function is as follows. Catalyzes ATP-dependent phosphorylation of D-ribulose at C-5 to form D-ribulose 5-phosphate. Postulated to function in a metabolite repair mechanism by preventing toxic accumulation of free D-ribulose formed by non-specific phosphatase activities. Alternatively, may play a role in regulating D-ribulose 5-phosphate recycling in the pentose phosphate pathway. Can phosphorylate ribitol with low efficiency. This Homo sapiens (Human) protein is FGGY carbohydrate kinase domain-containing protein.